The primary structure comprises 428 residues: Gamma-glutamyl phosphate reductase (428 aa).

Belongs to the gamma-glutamyl phosphate reductase family.

The protein resides in the cytoplasm. It carries out the reaction L-glutamate 5-semialdehyde + phosphate + NADP(+) = L-glutamyl 5-phosphate + NADPH + H(+). Its pathway is amino-acid biosynthesis; L-proline biosynthesis; L-glutamate 5-semialdehyde from L-glutamate: step 2/2. Catalyzes the NADPH-dependent reduction of L-glutamate 5-phosphate into L-glutamate 5-semialdehyde and phosphate. The product spontaneously undergoes cyclization to form 1-pyrroline-5-carboxylate. This chain is Gamma-glutamyl phosphate reductase, found in Anaeromyxobacter sp. (strain Fw109-5).